The sequence spans 160 residues: UPF0178 protein XC_1827 (160 aa).

It belongs to the UPF0178 family.

This chain is UPF0178 protein XC_1827, found in Xanthomonas campestris pv. campestris (strain 8004).